The chain runs to 352 residues: Molybdenum import ATP-binding protein ModC (352 aa).

The ABC transporter domain occupies 1-229 (MLQLDFHQQL…SALRPWLPKD (229 aa)). 31-38 (GVSGAGKT) contacts ATP. The Mop domain occupies 289-352 (KSSIRNVLRA…AQIKSVSITA (64 aa)).

This sequence belongs to the ABC transporter superfamily. Molybdate importer (TC 3.A.1.8) family. As to quaternary structure, the complex is composed of two ATP-binding proteins (ModC), two transmembrane proteins (ModB) and a solute-binding protein (ModA).

The protein localises to the cell inner membrane. The catalysed reaction is molybdate(out) + ATP + H2O = molybdate(in) + ADP + phosphate + H(+). In terms of biological role, part of the ABC transporter complex ModABC involved in molybdenum import. Responsible for energy coupling to the transport system. This chain is Molybdenum import ATP-binding protein ModC, found in Pectobacterium atrosepticum (strain SCRI 1043 / ATCC BAA-672) (Erwinia carotovora subsp. atroseptica).